The following is a 333-amino-acid chain: Biotin synthase (333 aa).

The Radical SAM core domain maps to 46–275 (YYGKKVKLNM…TKEIRISGGR (230 aa)). [4Fe-4S] cluster contacts are provided by Cys-64, Cys-68, and Cys-71. The [2Fe-2S] cluster site is built by Cys-108, Cys-140, Cys-200, and Arg-270.

The protein belongs to the radical SAM superfamily. Biotin synthase family. Homodimer. [4Fe-4S] cluster is required as a cofactor. Requires [2Fe-2S] cluster as cofactor.

The enzyme catalyses (4R,5S)-dethiobiotin + (sulfur carrier)-SH + 2 reduced [2Fe-2S]-[ferredoxin] + 2 S-adenosyl-L-methionine = (sulfur carrier)-H + biotin + 2 5'-deoxyadenosine + 2 L-methionine + 2 oxidized [2Fe-2S]-[ferredoxin]. Its pathway is cofactor biosynthesis; biotin biosynthesis; biotin from 7,8-diaminononanoate: step 2/2. In terms of biological role, catalyzes the conversion of dethiobiotin (DTB) to biotin by the insertion of a sulfur atom into dethiobiotin via a radical-based mechanism. In Halalkalibacterium halodurans (strain ATCC BAA-125 / DSM 18197 / FERM 7344 / JCM 9153 / C-125) (Bacillus halodurans), this protein is Biotin synthase.